The sequence spans 244 residues: CTD nuclear envelope phosphatase 1 (244 aa).

A helical membrane pass occupies residues 7 to 29 (LLGLRTFVAFAAKLWSFFIYLLR). The FCP1 homology domain occupies 57–224 (AQVKRKILVL…LNLLPMLDAL (168 aa)).

This sequence belongs to the dullard family. In terms of assembly, (Microbial infection) Interacts with Chandipura virus matrix protein. As to quaternary structure, interacts with CNEP1R1; the complex dephosphorylates LPIN1 and LPIN2. In terms of tissue distribution, muscle specific with lower expression in other metabolic tissues.

It localises to the endoplasmic reticulum membrane. It is found in the nucleus membrane. It catalyses the reaction O-phospho-L-seryl-[protein] + H2O = L-seryl-[protein] + phosphate. The enzyme catalyses O-phospho-L-threonyl-[protein] + H2O = L-threonyl-[protein] + phosphate. Functionally, serine/threonine protein phosphatase forming with CNEP1R1 an active phosphatase complex that dephosphorylates and may activate LPIN1 and LPIN2. LPIN1 and LPIN2 are phosphatidate phosphatases that catalyze the conversion of phosphatidic acid to diacylglycerol and control the metabolism of fatty acids at different levels. May indirectly modulate the lipid composition of nuclear and/or endoplasmic reticulum membranes and be required for proper nuclear membrane morphology and/or dynamics. May also indirectly regulate the production of lipid droplets and triacylglycerol. May antagonize BMP signaling. This is CTD nuclear envelope phosphatase 1 (CTDNEP1) from Homo sapiens (Human).